A 399-amino-acid chain; its full sequence is Probable 2-isopropylmalate synthase (399 aa).

Residues 20-272 enclose the Pyruvate carboxyltransferase domain; sequence VRIFDTTLRD…RTGVNTKLLY (253 aa). A divalent metal cation is bound by residues Asp29, His210, His212, and Asn246.

Belongs to the alpha-IPM synthase/homocitrate synthase family. Homodimer. A divalent metal cation serves as cofactor.

The catalysed reaction is 3-methyl-2-oxobutanoate + acetyl-CoA + H2O = (2S)-2-isopropylmalate + CoA + H(+). The protein operates within amino-acid biosynthesis; L-leucine biosynthesis; L-leucine from 3-methyl-2-oxobutanoate: step 1/4. Its function is as follows. Catalyzes the condensation of the acetyl group of acetyl-CoA with 3-methyl-2-oxobutanoate (2-oxoisovalerate) to form 3-carboxy-3-hydroxy-4-methylpentanoate (2-isopropylmalate). This chain is Probable 2-isopropylmalate synthase (leuA), found in Ignicoccus hospitalis (strain KIN4/I / DSM 18386 / JCM 14125).